The chain runs to 122 residues: Large ribosomal subunit protein bL20 (122 aa).

This sequence belongs to the bacterial ribosomal protein bL20 family.

Binds directly to 23S ribosomal RNA and is necessary for the in vitro assembly process of the 50S ribosomal subunit. It is not involved in the protein synthesizing functions of that subunit. In Saccharopolyspora erythraea (strain ATCC 11635 / DSM 40517 / JCM 4748 / NBRC 13426 / NCIMB 8594 / NRRL 2338), this protein is Large ribosomal subunit protein bL20.